Here is a 162-residue protein sequence, read N- to C-terminus: Small ribosomal subunit protein uS12m (162 aa).

Residues 1–37 (MIRFAQYARYPVISRLMKPTVISPFQAQAFSSSSVML) constitute a mitochondrion transit peptide.

The protein belongs to the universal ribosomal protein uS12 family. Component of the mitochondrial small ribosomal subunit (mt-SSU). Mature yeast 74S mitochondrial ribosomes consist of a small (37S) and a large (54S) subunit. The 37S small subunit contains a 15S ribosomal RNA (15S mt-rRNA) and at least 32 different proteins. The 54S large subunit contains a 21S rRNA (21S mt-rRNA) and at least 45 different proteins. uS12m forms part of the decoding center of the mt-SSU.

It localises to the mitochondrion. Its function is as follows. Component of the mitochondrial ribosome (mitoribosome), a dedicated translation machinery responsible for the synthesis of mitochondrial genome-encoded proteins, including at least some of the essential transmembrane subunits of the mitochondrial respiratory chain. The mitoribosomes are attached to the mitochondrial inner membrane and translation products are cotranslationally integrated into the membrane. uS12m is required for respiratory growth. The protein is Small ribosomal subunit protein uS12m of Schizosaccharomyces pombe (strain 972 / ATCC 24843) (Fission yeast).